The primary structure comprises 388 residues: Acetate kinase (388 aa).

Asn-8 lines the Mg(2+) pocket. Lys-15 serves as a coordination point for ATP. Arg-88 contacts substrate. Catalysis depends on Asp-144, which acts as the Proton donor/acceptor. ATP is bound by residues His-202 to Gly-206, Asp-276 to Arg-278, and Gly-321 to Asn-325. Residue Glu-375 coordinates Mg(2+).

Belongs to the acetokinase family. Homodimer. Mg(2+) is required as a cofactor. It depends on Mn(2+) as a cofactor.

It localises to the cytoplasm. It catalyses the reaction acetate + ATP = acetyl phosphate + ADP. It participates in metabolic intermediate biosynthesis; acetyl-CoA biosynthesis; acetyl-CoA from acetate: step 1/2. Catalyzes the formation of acetyl phosphate from acetate and ATP. Can also catalyze the reverse reaction. In Mycoplasmoides gallisepticum (strain R(low / passage 15 / clone 2)) (Mycoplasma gallisepticum), this protein is Acetate kinase.